The following is a 602-amino-acid chain: UvrABC system protein C (602 aa).

The GIY-YIG domain maps to Lys-17 to Ile-94. The UVR domain maps to Ser-199 to Ile-234.

It belongs to the UvrC family. Interacts with UvrB in an incision complex.

It localises to the cytoplasm. Its function is as follows. The UvrABC repair system catalyzes the recognition and processing of DNA lesions. UvrC both incises the 5' and 3' sides of the lesion. The N-terminal half is responsible for the 3' incision and the C-terminal half is responsible for the 5' incision. The chain is UvrABC system protein C from Borrelia duttonii (strain Ly).